Consider the following 105-residue polypeptide: ATP-dependent Clp protease adapter protein ClpS (105 aa).

This sequence belongs to the ClpS family. Binds to the N-terminal domain of the chaperone ClpA.

In terms of biological role, involved in the modulation of the specificity of the ClpAP-mediated ATP-dependent protein degradation. This is ATP-dependent Clp protease adapter protein ClpS from Klebsiella pneumoniae (strain 342).